We begin with the raw amino-acid sequence, 201 residues long: Small ribosomal subunit protein uS4c (201 aa).

Residues 20-44 are disordered; it reads GLTSKRPKAGSDLRNQSRSGKKSQY. The S4 RNA-binding domain maps to 89–152; sequence MRLDNILFRL…NSRTLVQNLL (64 aa).

This sequence belongs to the universal ribosomal protein uS4 family. Part of the 30S ribosomal subunit. Contacts protein S5. The interaction surface between S4 and S5 is involved in control of translational fidelity.

It localises to the plastid. The protein localises to the chloroplast. One of the primary rRNA binding proteins, it binds directly to 16S rRNA where it nucleates assembly of the body of the 30S subunit. In terms of biological role, with S5 and S12 plays an important role in translational accuracy. The polypeptide is Small ribosomal subunit protein uS4c (rps4) (Barbarea verna (Land cress)).